Consider the following 245-residue polypeptide: Probable transcriptional regulatory protein MAG6590 (245 aa).

The protein belongs to the TACO1 family.

Its subcellular location is the cytoplasm. The protein is Probable transcriptional regulatory protein MAG6590 of Mycoplasmopsis agalactiae (strain NCTC 10123 / CIP 59.7 / PG2) (Mycoplasma agalactiae).